Reading from the N-terminus, the 481-residue chain is Halobacterial transducer protein 9 (481 aa).

One can recognise a PAS domain in the interval 10 to 81 (SPFTVPLLLN…NKVADTPIDA (72 aa)). Positions 208–444 (DVERLEAASQ…EIAAMVDETA (237 aa)) constitute a Methyl-accepting transducer domain.

It belongs to the methyl-accepting chemotaxis (MCP) protein family.

Its subcellular location is the cytoplasm. Potentially involved in chemo- or phototactic signal transduction. This is Halobacterial transducer protein 9 (htr9) from Halobacterium salinarum (strain ATCC 700922 / JCM 11081 / NRC-1) (Halobacterium halobium).